Reading from the N-terminus, the 447-residue chain is GTPase Der (447 aa).

EngA-type G domains are found at residues 3–167 and 180–353; these read PVIA…ALPE and IRLA…KSAN. GTP-binding positions include 9 to 16, 56 to 60, 119 to 122, 186 to 193, 233 to 237, and 298 to 301; these read GRPNVGKS, DTGGF, NKAE, DTAGL, and NKWD. Residues 354-438 form the KH-like domain; it reads RKMPTPVLTR…PLRIEMKTSS (85 aa).

Belongs to the TRAFAC class TrmE-Era-EngA-EngB-Septin-like GTPase superfamily. EngA (Der) GTPase family. In terms of assembly, associates with the 50S ribosomal subunit.

Functionally, GTPase that plays an essential role in the late steps of ribosome biogenesis. This Acidovorax ebreus (strain TPSY) (Diaphorobacter sp. (strain TPSY)) protein is GTPase Der.